The following is a 339-amino-acid chain: MFKQLLAKCIEGYTLTEEEAYEAMMMIMSGEASASQIASFLSILRLRGETVDELTGLVKAMRNRMMTLDYEEEAIDTCGTGGDGASTFNISTAAAIVVSSLGVKVAKHGNRAVSSKSGSADVLEALHIDIQATPEEAKRALKTKGLAFLFAPLYHSAMKYAALPRKEIGFRTVFNLIGPLSNPARCKRQVIGVYSTQYAEKLAETLHRLGSEHVLLVTGKDGLDECSISAETDVVELKHGEIRRFTIAPEQYGLARGKLEHVQVRTVQQSAELLKAVLEGRANESAINIVILNAGVALYAAGKAATIREGVEMAKEAMMTKKAYEQFERLRMKEVEKYA.

5-phospho-alpha-D-ribose 1-diphosphate contacts are provided by residues glycine 79, 82–83 (GD), threonine 87, 89–92 (NIST), 107–115 (KHGNRAVSS), and serine 119. Glycine 79 is an anthranilate binding site. A Mg(2+)-binding site is contributed by serine 91. An anthranilate-binding site is contributed by asparagine 110. Arginine 165 is a binding site for anthranilate. Mg(2+) contacts are provided by aspartate 224 and glutamate 225.

This sequence belongs to the anthranilate phosphoribosyltransferase family. Homodimer. Mg(2+) serves as cofactor.

The enzyme catalyses N-(5-phospho-beta-D-ribosyl)anthranilate + diphosphate = 5-phospho-alpha-D-ribose 1-diphosphate + anthranilate. It functions in the pathway amino-acid biosynthesis; L-tryptophan biosynthesis; L-tryptophan from chorismate: step 2/5. In terms of biological role, catalyzes the transfer of the phosphoribosyl group of 5-phosphorylribose-1-pyrophosphate (PRPP) to anthranilate to yield N-(5'-phosphoribosyl)-anthranilate (PRA). The sequence is that of Anthranilate phosphoribosyltransferase from Geobacillus sp. (strain WCH70).